Here is a 293-residue protein sequence, read N- to C-terminus: ATP synthase gamma chain (293 aa).

Belongs to the ATPase gamma chain family. As to quaternary structure, F-type ATPases have 2 components, CF(1) - the catalytic core - and CF(0) - the membrane proton channel. CF(1) has five subunits: alpha(3), beta(3), gamma(1), delta(1), epsilon(1). CF(0) has three main subunits: a, b and c.

The protein localises to the cell inner membrane. In terms of biological role, produces ATP from ADP in the presence of a proton gradient across the membrane. The gamma chain is believed to be important in regulating ATPase activity and the flow of protons through the CF(0) complex. This is ATP synthase gamma chain from Psychrobacter sp. (strain PRwf-1).